Consider the following 114-residue polypeptide: Transmembrane protein 14C (114 aa).

A run of 4 helical transmembrane segments spans residues 8 to 28, 33 to 53, 62 to 82, and 87 to 107; these read LVPLHWLGFGYAALVASGGII, AGSVPSLAAGLLFGGLAGLGS, NIWLFLVTSGTLAGIMGMRFY, and FMPAGLIAGASLLMVVKLGIS.

It is found in the mitochondrion membrane. Required for normal heme biosynthesis. The polypeptide is Transmembrane protein 14C (TMEM14C) (Bos taurus (Bovine)).